A 274-amino-acid chain; its full sequence is Large ribosomal subunit protein uL2 (274 aa).

2 disordered regions span residues 35–60 (EPQH…GHKH) and 224–274 (VMNP…RRKK). A compositionally biased stretch (basic residues) spans 50–60 (TTRHKGGGHKH). The segment covering 229–246 (DHPHGGGEGKTGEGRHAV) has biased composition (basic and acidic residues).

It belongs to the universal ribosomal protein uL2 family. In terms of assembly, part of the 50S ribosomal subunit. Forms a bridge to the 30S subunit in the 70S ribosome.

One of the primary rRNA binding proteins. Required for association of the 30S and 50S subunits to form the 70S ribosome, for tRNA binding and peptide bond formation. It has been suggested to have peptidyltransferase activity; this is somewhat controversial. Makes several contacts with the 16S rRNA in the 70S ribosome. This is Large ribosomal subunit protein uL2 from Delftia acidovorans (strain DSM 14801 / SPH-1).